Consider the following 400-residue polypeptide: Nicotinate phosphoribosyltransferase (400 aa).

Histidine 220 carries the post-translational modification Phosphohistidine; by autocatalysis.

Belongs to the NAPRTase family. Post-translationally, transiently phosphorylated on a His residue during the reaction cycle. Phosphorylation strongly increases the affinity for substrates and increases the rate of nicotinate D-ribonucleotide production. Dephosphorylation regenerates the low-affinity form of the enzyme, leading to product release.

The catalysed reaction is nicotinate + 5-phospho-alpha-D-ribose 1-diphosphate + ATP + H2O = nicotinate beta-D-ribonucleotide + ADP + phosphate + diphosphate. Its pathway is cofactor biosynthesis; NAD(+) biosynthesis; nicotinate D-ribonucleotide from nicotinate: step 1/1. Its function is as follows. Catalyzes the synthesis of beta-nicotinate D-ribonucleotide from nicotinate and 5-phospho-D-ribose 1-phosphate at the expense of ATP. The protein is Nicotinate phosphoribosyltransferase of Salmonella schwarzengrund (strain CVM19633).